We begin with the raw amino-acid sequence, 1232 residues long: Anion exchange protein 3 (1232 aa).

A compositionally biased stretch (pro residues) spans 1-11 (MANGVIPPPGG). 2 disordered regions span residues 1–316 (MANG…KLDR) and 429–499 (NDDK…DSHR). The Cytoplasmic portion of the chain corresponds to 1–708 (MANGVIPPPG…DLRDALHSQC (708 aa)). Residues 58-75 (DPEKPSRSYSERDFEFHR) are compositionally biased toward basic and acidic residues. Basic residues-rich tracts occupy residues 76-97 (HTSHHTHHPLSARLPPPHKLRR) and 104-113 (RHTRRKRKKE). Residues 134 to 152 (VDEEEEEEEEEEGESEAEP) are compositionally biased toward acidic residues. A phosphoserine mark is found at serine 167, serine 170, serine 175, and serine 198. The span at 267–279 (DDMKSHRLEDNPG) shows a compositional bias: basic and acidic residues. Positions 280-289 (VRRHLVKKPS) are enriched in basic residues. The residue at position 295 (arginine 295) is an Omega-N-methylarginine. A compositionally biased stretch (basic residues) spans 305–316 (LRRKKKKKKLDR). Positions 440 to 450 (NPSSSSMNSVL) are enriched in polar residues. Positions 481-499 (HDPDAKEKPLHMPGGDSHR) are enriched in basic and acidic residues. 5 helical membrane-spanning segments follow: residues 709–731 (VAAVLFIYFAALSPAITFGGLLG), 737–774 (LMGVSELIVSTAVLGVLFSLLGAQPLLVVGFSGPLLVF), 794–816 (VWVGLWLVVFVLALVAAEGSFLV), 826–847 (IFAFLISLIFIYETFYKLYKVF), and 893–910 (ALLSLILMLGTFFIAFFL). The interval 709–1232 (VAAVLFIYFA…DEYNELHMPV (524 aa)) is membrane (anion exchange). Topologically, residues 911–925 (RKFRNSRFLGGKARR) are cytoplasmic. The next 5 membrane-spanning stretches (helical) occupy residues 926 to 946 (IIGDFGIPISILVMVLVDYSI), 980 to 1002 (PFPPWMMVAAAVPALLVLILIFM), 1028 to 1049 (LLLIGSLGGLCGLFGLPWLTAA), 1083 to 1128 (VTGV…IQLS), and 1155 to 1191 (MHLFTCIQLGCIALLWVVKSTAASLAFPFLLLLTVPL). A lipid anchor (S-palmitoyl cysteine) is attached at cysteine 1165.

It belongs to the anion exchanger (TC 2.A.31) family.

Its subcellular location is the cell membrane. The enzyme catalyses hydrogencarbonate(in) + chloride(out) = hydrogencarbonate(out) + chloride(in). Its function is as follows. Sodium-independent anion exchanger which mediates the electroneutral exchange of chloride for bicarbonate ions across the cell membrane. May be involved in the regulation of intracellular pH, and the modulation of cardiac action potential. This chain is Anion exchange protein 3 (SLC4A3), found in Plecturocebus moloch (Dusky titi monkey).